Here is a 101-residue protein sequence, read N- to C-terminus: Ubiquitin-related modifier 1 (101 aa).

Glycine 101 bears the 1-thioglycine mark. Residue glycine 101 forms a Glycyl lysine isopeptide (Gly-Lys) (interchain with K-? in acceptor proteins) linkage.

It belongs to the URM1 family. In terms of processing, C-terminal thiocarboxylation occurs in 2 steps, it is first acyl-adenylated (-COAMP) via the hesA/moeB/thiF part of UBA4, then thiocarboxylated (-COSH) via the rhodanese domain of UBA4.

It localises to the cytoplasm. Its pathway is tRNA modification; 5-methoxycarbonylmethyl-2-thiouridine-tRNA biosynthesis. Functionally, acts as a sulfur carrier required for 2-thiolation of mcm(5)S(2)U at tRNA wobble positions of cytosolic tRNA(Lys), tRNA(Glu) and tRNA(Gln). Serves as sulfur donor in tRNA 2-thiolation reaction by being thiocarboxylated (-COSH) at its C-terminus by the MOCS3 homolog UBA4. The sulfur is then transferred to tRNA to form 2-thiolation of mcm(5)S(2)U. Prior mcm(5) tRNA modification by the elongator complex is required for 2-thiolation. Also acts as a ubiquitin-like protein (UBL) that is covalently conjugated via an isopeptide bond to lysine residues of target proteins such as AHP1. The thiocarboxylated form serves as substrate for conjugation and oxidative stress specifically induces the formation of UBL-protein conjugates. The sequence is that of Ubiquitin-related modifier 1 from Candida albicans (strain SC5314 / ATCC MYA-2876) (Yeast).